Reading from the N-terminus, the 151-residue chain is Ribosome maturation factor RimP (151 aa).

The protein belongs to the RimP family.

The protein resides in the cytoplasm. Functionally, required for maturation of 30S ribosomal subunits. This Vibrio vulnificus (strain CMCP6) protein is Ribosome maturation factor RimP.